We begin with the raw amino-acid sequence, 415 residues long: Serine hydroxymethyltransferase (415 aa).

(6S)-5,6,7,8-tetrahydrofolate-binding positions include leucine 117 and 121-123 (GHL). Residue lysine 226 is modified to N6-(pyridoxal phosphate)lysine.

This sequence belongs to the SHMT family. In terms of assembly, homodimer. Pyridoxal 5'-phosphate serves as cofactor.

It is found in the cytoplasm. It catalyses the reaction (6R)-5,10-methylene-5,6,7,8-tetrahydrofolate + glycine + H2O = (6S)-5,6,7,8-tetrahydrofolate + L-serine. The protein operates within one-carbon metabolism; tetrahydrofolate interconversion. It functions in the pathway amino-acid biosynthesis; glycine biosynthesis; glycine from L-serine: step 1/1. Functionally, catalyzes the reversible interconversion of serine and glycine with tetrahydrofolate (THF) serving as the one-carbon carrier. This reaction serves as the major source of one-carbon groups required for the biosynthesis of purines, thymidylate, methionine, and other important biomolecules. Also exhibits THF-independent aldolase activity toward beta-hydroxyamino acids, producing glycine and aldehydes, via a retro-aldol mechanism. This chain is Serine hydroxymethyltransferase, found in Leptospira borgpetersenii serovar Hardjo-bovis (strain JB197).